The chain runs to 216 residues: Phosphoribosylaminoimidazole-succinocarboxamide synthase (216 aa).

This sequence belongs to the SAICAR synthetase family.

The catalysed reaction is 5-amino-1-(5-phospho-D-ribosyl)imidazole-4-carboxylate + L-aspartate + ATP = (2S)-2-[5-amino-1-(5-phospho-beta-D-ribosyl)imidazole-4-carboxamido]succinate + ADP + phosphate + 2 H(+). Its pathway is purine metabolism; IMP biosynthesis via de novo pathway; 5-amino-1-(5-phospho-D-ribosyl)imidazole-4-carboxamide from 5-amino-1-(5-phospho-D-ribosyl)imidazole-4-carboxylate: step 1/2. The polypeptide is Phosphoribosylaminoimidazole-succinocarboxamide synthase (purC) (Aquifex aeolicus (strain VF5)).